We begin with the raw amino-acid sequence, 842 residues long: Alanine--tRNA ligase (842 aa).

The Zn(2+) site is built by histidine 549, histidine 553, cysteine 650, and histidine 654.

This sequence belongs to the class-II aminoacyl-tRNA synthetase family. It depends on Zn(2+) as a cofactor.

It localises to the cytoplasm. It catalyses the reaction tRNA(Ala) + L-alanine + ATP = L-alanyl-tRNA(Ala) + AMP + diphosphate. Its function is as follows. Catalyzes the attachment of alanine to tRNA(Ala) in a two-step reaction: alanine is first activated by ATP to form Ala-AMP and then transferred to the acceptor end of tRNA(Ala). Also edits incorrectly charged Ser-tRNA(Ala) and Gly-tRNA(Ala) via its editing domain. The chain is Alanine--tRNA ligase from Campylobacter jejuni subsp. jejuni serotype O:2 (strain ATCC 700819 / NCTC 11168).